The chain runs to 338 residues: Flap endonuclease 1 (338 aa).

The N-domain stretch occupies residues 1 to 98; that stretch reads MGTDIGDLLL…DTLAKRHEVR (98 aa). Positions 27, 80, 152, 154, 173, 175, and 236 each coordinate Mg(2+). The segment at 116–257 is I-domain; it reads EAYKYAQASS…RALKLVKEHG (142 aa). The tract at residues 330 to 338 is interaction with PCNA; sequence SQSTLDQWF.

It belongs to the XPG/RAD2 endonuclease family. FEN1 subfamily. In terms of assembly, interacts with PCNA. PCNA stimulates the nuclease activity without altering cleavage specificity. Mg(2+) is required as a cofactor.

Functionally, structure-specific nuclease with 5'-flap endonuclease and 5'-3' exonuclease activities involved in DNA replication and repair. During DNA replication, cleaves the 5'-overhanging flap structure that is generated by displacement synthesis when DNA polymerase encounters the 5'-end of a downstream Okazaki fragment. Binds the unpaired 3'-DNA end and kinks the DNA to facilitate 5' cleavage specificity. Cleaves one nucleotide into the double-stranded DNA from the junction in flap DNA, leaving a nick for ligation. Also involved in the base excision repair (BER) pathway. Acts as a genome stabilization factor that prevents flaps from equilibrating into structures that lead to duplications and deletions. Also possesses 5'-3' exonuclease activity on nicked or gapped double-stranded DNA. This chain is Flap endonuclease 1, found in Methanococcoides burtonii (strain DSM 6242 / NBRC 107633 / OCM 468 / ACE-M).